Here is a 65-residue protein sequence, read N- to C-terminus: MPKIKTLRSAAKRFKKTASGKFKRKQANLRHILTKKTTTKKRHLRPKILVSKGDISKVKSFLPYF.

Residues 1–22 (MPKIKTLRSAAKRFKKTASGKF) are disordered. Positions 10–22 (AAKRFKKTASGKF) are enriched in basic residues.

It belongs to the bacterial ribosomal protein bL35 family.

This is Large ribosomal subunit protein bL35 from Buchnera aphidicola subsp. Schizaphis graminum (strain Sg).